A 122-amino-acid polypeptide reads, in one-letter code: Small ribosomal subunit protein uS13 (122 aa).

Residues 98–122 form a disordered region; it reads VRGQRTHTNARTRKGPAKAIAGKKK.

This sequence belongs to the universal ribosomal protein uS13 family. As to quaternary structure, part of the 30S ribosomal subunit. Forms a loose heterodimer with protein S19. Forms two bridges to the 50S subunit in the 70S ribosome.

Functionally, located at the top of the head of the 30S subunit, it contacts several helices of the 16S rRNA. In the 70S ribosome it contacts the 23S rRNA (bridge B1a) and protein L5 of the 50S subunit (bridge B1b), connecting the 2 subunits; these bridges are implicated in subunit movement. Contacts the tRNAs in the A and P-sites. In Jannaschia sp. (strain CCS1), this protein is Small ribosomal subunit protein uS13.